The chain runs to 310 residues: MNENSRLHTHSNIRNTFFSEIGIGISGNSFLLLFHIIKFFRGHRPRLTDLPIGLLSLIHLLMLLVAAVIATDIFISWRGWNDIICKFLVYLYRSLRGLSLCTTSMLSVLQAIILSPRSYCLAKFKRKSSHNISCAIIFLSVLYMSISSHLFISITATLNLTMNNFLYVSQSCSLLPLSYLMQSMYSTLLVLREVFLIGLMVLSTSYMVALLCMHRKQAQNLQGTSLSLKTAPEQRATQTILMLMTFFVLMSIFDSIVSSSRAMFLDDSTCYSIYIFVMHIYATVSPFVFMSTEKHLVNFFRSMCEWIINM.

Topologically, residues 1–16 (MNENSRLHTHSNIRNT) are extracellular. The chain crosses the membrane as a helical span at residues 17–37 (FFSEIGIGISGNSFLLLFHII). The Cytoplasmic segment spans residues 38–49 (KFFRGHRPRLTD). A helical membrane pass occupies residues 50 to 70 (LPIGLLSLIHLLMLLVAAVIA). At 71 to 91 (TDIFISWRGWNDIICKFLVYL) the chain is on the extracellular side. Cys85 and Cys172 are joined by a disulfide. Residues 92–114 (YRSLRGLSLCTTSMLSVLQAIIL) traverse the membrane as a helical segment. The Cytoplasmic segment spans residues 115–131 (SPRSYCLAKFKRKSSHN). The chain crosses the membrane as a helical span at residues 132–152 (ISCAIIFLSVLYMSISSHLFI). Topologically, residues 153–193 (SITATLNLTMNNFLYVSQSCSLLPLSYLMQSMYSTLLVLRE) are extracellular. N-linked (GlcNAc...) asparagine glycosylation is present at Asn159. Residues 194–214 (VFLIGLMVLSTSYMVALLCMH) traverse the membrane as a helical segment. Residues 215-238 (RKQAQNLQGTSLSLKTAPEQRATQ) are Cytoplasmic-facing. A helical transmembrane segment spans residues 239-259 (TILMLMTFFVLMSIFDSIVSS). Topologically, residues 260-269 (SRAMFLDDST) are extracellular. A helical membrane pass occupies residues 270 to 290 (CYSIYIFVMHIYATVSPFVFM). Residues 291-310 (STEKHLVNFFRSMCEWIINM) lie on the Cytoplasmic side of the membrane.

Belongs to the G-protein coupled receptor 1 family.

It is found in the cell membrane. Its function is as follows. Putative pheromone receptor implicated in the regulation of social and reproductive behavior. This Mus musculus (Mouse) protein is Vomeronasal type-1 receptor 47 (Vmn1r47).